Reading from the N-terminus, the 104-residue chain is Protein RnfH (104 aa).

This sequence belongs to the UPF0125 (RnfH) family.

The protein is Protein RnfH of Pseudomonas savastanoi pv. phaseolicola (strain 1448A / Race 6) (Pseudomonas syringae pv. phaseolicola (strain 1448A / Race 6)).